We begin with the raw amino-acid sequence, 293 residues long: Energy-coupling factor transporter ATP-binding protein EcfA2 (293 aa).

Residues 3 to 246 enclose the ABC transporter domain; the sequence is ITFQKVEHRY…ADELEKIGVD (244 aa). 40 to 47 is an ATP binding site; it reads GHTGSGKS.

The protein belongs to the ABC transporter superfamily. Energy-coupling factor EcfA family. In terms of assembly, forms a stable energy-coupling factor (ECF) transporter complex composed of 2 membrane-embedded substrate-binding proteins (S component), 2 ATP-binding proteins (A component) and 2 transmembrane proteins (T component).

The protein localises to the cell membrane. Its function is as follows. ATP-binding (A) component of a common energy-coupling factor (ECF) ABC-transporter complex. Unlike classic ABC transporters this ECF transporter provides the energy necessary to transport a number of different substrates. This is Energy-coupling factor transporter ATP-binding protein EcfA2 from Bacillus thuringiensis (strain Al Hakam).